A 241-amino-acid polypeptide reads, in one-letter code: Anti-Pycsar protein Apyc1 (241 aa).

Positions 17 to 215 (DNNNALLEQD…SVQKKTWLMH (199 aa)) are beta-lactamase-like. Zn(2+)-binding residues include histidine 59, histidine 61, aspartate 63, histidine 64, histidine 142, aspartate 162, and histidine 215.

It belongs to the nuclease anti-Pycsar protein Apyc1 family. In terms of assembly, homodimer. Zn(2+) is required as a cofactor.

The catalysed reaction is 3',5'-cyclic CMP + H2O = CMP + H(+). It catalyses the reaction 3',5'-cyclic UMP + H2O = UMP + H(+). Its function is as follows. Counteracts the endogenous Pycsar antiviral defense system. Phosphodiesterase that enables metal-dependent hydrolysis of host cyclic nucleotide Pycsar defense signals such as cCMP and cUMP. The chain is Anti-Pycsar protein Apyc1 from Paenibacillus harenae.